We begin with the raw amino-acid sequence, 101 residues long: Stefin-C (101 aa).

M1 is modified (N-acetylmethionine). Residues Q49 to G53 carry the Secondary area of contact motif.

This sequence belongs to the cystatin family.

The protein localises to the cytoplasm. Its function is as follows. Strong inhibitor of papain and cathepsin L but poor inhibitor of cathepsin B. In Bos taurus (Bovine), this protein is Stefin-C.